The following is a 360-amino-acid chain: MEGNGCGGSGATPRGVVGMHWAPVVTSPPSPQPPFLPPAPCRPDVQMQQQGGLTCLKLGKRPCFWGGDGAGQVAQGSGGGGGGGGGGSADQGKRKEKAATAVPVVPRCQVEGCDITLQGVKEYHRRHKVCEVHAKAPRVVVHGTEQRFCQQCSRFHVLAEFDDAKKSCRRRLAGHNERRRRSNASEAMARGSAHPHGMPVLGHGFPPYGLPTSSAGALSLLSSARATGPWLMPTPDISARSSAALDELIAENRAALLSWQFFSDRQPPPAGRPTGRSPGSETAGGWHAHLQARPPPPGAGGQHENQSGHVTLDLMQATTAAGGSGAPFRPVPARPPKEGGDAGCTSDAWTPSPMEGARVV.

Over residues 74-89 (AQGSGGGGGGGGGGSA) the composition is skewed to gly residues. Positions 74–98 (AQGSGGGGGGGGGGSADQGKRKEKA) are disordered. Residues 105-182 (VPRCQVEGCD…AGHNERRRRS (78 aa)) form an SBP-type zinc finger. Zn(2+)-binding residues include cysteine 108, cysteine 113, cysteine 130, histidine 133, cysteine 149, cysteine 152, histidine 156, and cysteine 168. The short motif at 165-181 (KKSCRRRLAGHNERRRR) is the Bipartite nuclear localization signal element. A compositionally biased stretch (basic residues) spans 172–182 (LAGHNERRRRS). 3 disordered regions span residues 172–196 (LAGHNERRRRSNASEAMARGSAHPH), 261–306 (FFSD…HENQ), and 318–360 (TTAA…ARVV).

As to expression, expressed in young panicles.

Its subcellular location is the nucleus. In terms of biological role, trans-acting factor that binds specifically to the consensus nucleotide sequence 5'-TNCGTACAA-3'. May be involved in panicle development. The polypeptide is Squamosa promoter-binding-like protein 7 (SPL7) (Oryza sativa subsp. japonica (Rice)).